Here is a 378-residue protein sequence, read N- to C-terminus: Peptide methionine sulfoxide reductase MsrA/MsrB (378 aa).

Residues 40 to 197 (QQATLAGGCF…KVRYNYYRYA (158 aa)) are peptide methionine sulfoxide reductase A. C48 is an active-site residue. The region spanning 240-362 (DEQIRAKLTS…NSAAMRFIPK (123 aa)) is the MsrB domain. The Nucleophile role is filled by C351.

It in the N-terminal section; belongs to the MsrA Met sulfoxide reductase family. In the C-terminal section; belongs to the MsrB Met sulfoxide reductase family.

The enzyme catalyses L-methionyl-[protein] + [thioredoxin]-disulfide + H2O = L-methionyl-(S)-S-oxide-[protein] + [thioredoxin]-dithiol. The catalysed reaction is [thioredoxin]-disulfide + L-methionine + H2O = L-methionine (S)-S-oxide + [thioredoxin]-dithiol. It carries out the reaction L-methionyl-[protein] + [thioredoxin]-disulfide + H2O = L-methionyl-(R)-S-oxide-[protein] + [thioredoxin]-dithiol. Its function is as follows. Has an important function as a repair enzyme for proteins that have been inactivated by oxidation. Catalyzes the reversible oxidation-reduction of methionine sulfoxide in proteins to methionine. The protein is Peptide methionine sulfoxide reductase MsrA/MsrB (msrAB) of Vibrio cholerae serotype O1 (strain ATCC 39315 / El Tor Inaba N16961).